Here is a 605-residue protein sequence, read N- to C-terminus: DNA primase (605 aa).

A CHC2-type zinc finger spans residues 39 to 63; that stretch reads CPFHHERTPSFHVVPDKKMYYCFGC. In terms of domain architecture, Toprim spans 257–338; that stretch reads RAAIICEGYM…EVRIVELNGG (82 aa). Mg(2+)-binding residues include Glu263, Asp307, and Asp309.

The protein belongs to the DnaG primase family. In terms of assembly, monomer. Interacts with DnaB. Requires Zn(2+) as cofactor. The cofactor is Mg(2+).

The enzyme catalyses ssDNA + n NTP = ssDNA/pppN(pN)n-1 hybrid + (n-1) diphosphate.. Functionally, RNA polymerase that catalyzes the synthesis of short RNA molecules used as primers for DNA polymerase during DNA replication. The protein is DNA primase of Treponema pallidum (strain Nichols).